A 78-amino-acid polypeptide reads, in one-letter code: Small ribosomal subunit protein bS18 (78 aa).

It belongs to the bacterial ribosomal protein bS18 family. Part of the 30S ribosomal subunit. Forms a tight heterodimer with protein bS6.

Binds as a heterodimer with protein bS6 to the central domain of the 16S rRNA, where it helps stabilize the platform of the 30S subunit. The sequence is that of Small ribosomal subunit protein bS18 from Beutenbergia cavernae (strain ATCC BAA-8 / DSM 12333 / CCUG 43141 / JCM 11478 / NBRC 16432 / NCIMB 13614 / HKI 0122).